A 189-amino-acid polypeptide reads, in one-letter code: MTSIDEAAPGRSAASDAAADVLRGHIRDIQDWPQPGVVFKDITPLLSTPAAFGVVVGALVDVARERGATTIAGIEARGFLLAAPVADRLGAALVPIRKQGKLPGPTRSATYDLEYGTATIEIHADAVRPDERVLLVDDVLATGGTAAAAHGLLAGVGAEVVGLAVLMELSFLPGRERVAPLDVVPLLTI.

This sequence belongs to the purine/pyrimidine phosphoribosyltransferase family. In terms of assembly, homodimer.

It localises to the cytoplasm. It carries out the reaction AMP + diphosphate = 5-phospho-alpha-D-ribose 1-diphosphate + adenine. The protein operates within purine metabolism; AMP biosynthesis via salvage pathway; AMP from adenine: step 1/1. In terms of biological role, catalyzes a salvage reaction resulting in the formation of AMP, that is energically less costly than de novo synthesis. In Frankia alni (strain DSM 45986 / CECT 9034 / ACN14a), this protein is Adenine phosphoribosyltransferase.